The chain runs to 467 residues: MAIVNSWLICLVSIFSFVVRVEAATFCNATQACPEDKPCCSQYGECGTGQYCLNNCDVRYSFSHDSCMPVPICKSSSTKFKDYSSKLGNANTFLGNVSEADWLYTGDVLDYDDEESLILAMPKNSGGTVLSSTRAVWYGKVSARIKTSHLAGVVTGFILYSGAGDELDYEFVGADLETAQTNFYWESVLNYTNSANISTTDTFENYHTYELDWHEDYVTWSIDGVVGRTLYKNETYNATTQKYQYPQTPSKVDISIWPGGNSTNAPGTIAWSGGEINWDASDISNPGYYYAIVNEVNITCYDPPSDTKKNGTSAYVYTSSSEFLAKDIAITDDEVMMDSDEGSGLDPHKGATTSSTQKSSSSTATSSSKTSSDHSSSTKKSSKTSSTASSSSSSSSSSSSSSSTATKNGDKVVSSVSSSVTSQTQTTSSVSGSASSSTSSMSGNNAGANVAANWRLTVLCVILGYVL.

Residues 1-23 (MAIVNSWLICLVSIFSFVVRVEA) form the signal peptide. A glycan (N-linked (GlcNAc...) asparagine) is linked at asparagine 28. The cysteines at positions 56 and 67 are disulfide-linked. One can recognise a GH16 domain in the interval 63-280 (SHDSCMPVPI…WSGGEINWDA (218 aa)). A glycan (N-linked (GlcNAc...) asparagine) is linked at asparagine 96. The active-site Nucleophile is the glutamate 166. The active-site Proton donor is the glutamate 170. Position 170 (glutamate 170) interacts with chitin. N-linked (GlcNAc...) asparagine glycosylation is found at asparagine 190, asparagine 196, asparagine 233, and asparagine 237. Tryptophan 257 contacts chitin. Asparagine 261 carries an N-linked (GlcNAc...) asparagine glycan. Threonine 268 provides a ligand contact to chitin. Asparagine 297 and asparagine 310 each carry an N-linked (GlcNAc...) asparagine glycan. The disordered stretch occupies residues 337–444 (MDSDEGSGLD…SSSTSSMSGN (108 aa)). The span at 351–444 (ATTSSTQKSS…SSSTSSMSGN (94 aa)) shows a compositional bias: low complexity. Asparagine 445 carries GPI-anchor amidated asparagine lipidation. Positions 446–467 (AGANVAANWRLTVLCVILGYVL) are cleaved as a propeptide — removed in mature form.

Belongs to the glycosyl hydrolase 16 family. CRH1 subfamily. In terms of processing, the GPI-anchor is attached to the protein in the endoplasmic reticulum and serves to target the protein to the cell surface. There, the glucosamine-inositol phospholipid moiety is cleaved off and the GPI-modified mannoprotein is covalently attached via its lipidless GPI glycan remnant to the 1,6-beta-glucan of the outer cell wall layer.

It localises to the secreted. It is found in the cell wall. The protein resides in the membrane. The catalysed reaction is Random endo-hydrolysis of N-acetyl-beta-D-glucosaminide (1-&gt;4)-beta-linkages in chitin and chitodextrins.. Functionally, dual chitinase/transglycosylase that plays a role in cell wall architecture. Chitinase and transglycosylase activities are coupled. Required for the polysaccharide cross-linking at the septa and the cell wall. More specifically, transfers chitin to both beta(1-3)- and beta(1-6)glucan in the cell wall. The minimal number of intact hexopyranose units required in the molecule of the acceptor oligosaccharide is two and the effectivity of the acceptor increased with the increasing length of its oligosaccharide chain. The chain is Congo red hypersensitive protein 2 from Saccharomyces cerevisiae (strain ATCC 204508 / S288c) (Baker's yeast).